The chain runs to 288 residues: Phosphatidylserine decarboxylase proenzyme (288 aa).

Residues aspartate 91, histidine 148, and serine 254 each act as charge relay system; for autoendoproteolytic cleavage activity in the active site. Serine 254 (schiff-base intermediate with substrate; via pyruvic acid; for decarboxylase activity) is an active-site residue. A Pyruvic acid (Ser); by autocatalysis modification is found at serine 254.

Belongs to the phosphatidylserine decarboxylase family. PSD-B subfamily. Prokaryotic type I sub-subfamily. As to quaternary structure, heterodimer of a large membrane-associated beta subunit and a small pyruvoyl-containing alpha subunit. Requires pyruvate as cofactor. Is synthesized initially as an inactive proenzyme. Formation of the active enzyme involves a self-maturation process in which the active site pyruvoyl group is generated from an internal serine residue via an autocatalytic post-translational modification. Two non-identical subunits are generated from the proenzyme in this reaction, and the pyruvate is formed at the N-terminus of the alpha chain, which is derived from the carboxyl end of the proenzyme. The autoendoproteolytic cleavage occurs by a canonical serine protease mechanism, in which the side chain hydroxyl group of the serine supplies its oxygen atom to form the C-terminus of the beta chain, while the remainder of the serine residue undergoes an oxidative deamination to produce ammonia and the pyruvoyl prosthetic group on the alpha chain. During this reaction, the Ser that is part of the protease active site of the proenzyme becomes the pyruvoyl prosthetic group, which constitutes an essential element of the active site of the mature decarboxylase.

It localises to the cell membrane. It catalyses the reaction a 1,2-diacyl-sn-glycero-3-phospho-L-serine + H(+) = a 1,2-diacyl-sn-glycero-3-phosphoethanolamine + CO2. Its pathway is phospholipid metabolism; phosphatidylethanolamine biosynthesis; phosphatidylethanolamine from CDP-diacylglycerol: step 2/2. Its function is as follows. Catalyzes the formation of phosphatidylethanolamine (PtdEtn) from phosphatidylserine (PtdSer). The polypeptide is Phosphatidylserine decarboxylase proenzyme (Pseudoalteromonas translucida (strain TAC 125)).